An 89-amino-acid polypeptide reads, in one-letter code: Small ribosomal subunit protein uS15 (89 aa).

The protein belongs to the universal ribosomal protein uS15 family. As to quaternary structure, part of the 30S ribosomal subunit. Forms a bridge to the 50S subunit in the 70S ribosome, contacting the 23S rRNA.

One of the primary rRNA binding proteins, it binds directly to 16S rRNA where it helps nucleate assembly of the platform of the 30S subunit by binding and bridging several RNA helices of the 16S rRNA. Its function is as follows. Forms an intersubunit bridge (bridge B4) with the 23S rRNA of the 50S subunit in the ribosome. In Azotobacter vinelandii (strain DJ / ATCC BAA-1303), this protein is Small ribosomal subunit protein uS15.